Reading from the N-terminus, the 1025-residue chain is Multidrug resistance protein MdtC (1025 aa).

Helical transmembrane passes span 3–23 (FFAL…AITL), 333–353 (EVEQ…FLFL), 360–380 (IIPA…MYLC), 387–407 (LSLM…IVVL), 431–451 (VGFT…PLLL), 463–483 (FAVT…TLTP), 528–548 (LVGA…ISIP), 853–873 (VILI…LYES), 875–895 (VHPL…LLAL), 897–917 (LFNA…IGIV), 953–973 (PIMM…LSGG), and 984–1004 (ITIV…TPVV).

This sequence belongs to the resistance-nodulation-cell division (RND) (TC 2.A.6) family. MdtC subfamily. Part of a tripartite efflux system composed of MdtA, MdtB and MdtC. MdtC forms a heteromultimer with MdtB.

The protein resides in the cell inner membrane. Its function is as follows. The MdtABC tripartite complex confers resistance against novobiocin and deoxycholate. This chain is Multidrug resistance protein MdtC, found in Escherichia coli O81 (strain ED1a).